The primary structure comprises 196 residues: Small ribosomal subunit protein uS4c (196 aa).

The segment at 15 to 36 is disordered; it reads LGTLPGLTSKRPRSGSDLKNPL. The region spanning 89–150 is the S4 RNA-binding domain; sequence MRLDNILFRL…KQRSKALIQN (62 aa).

The protein belongs to the universal ribosomal protein uS4 family. As to quaternary structure, part of the 30S ribosomal subunit. Contacts protein S5. The interaction surface between S4 and S5 is involved in control of translational fidelity.

It is found in the plastid. The protein resides in the chloroplast. Its function is as follows. One of the primary rRNA binding proteins, it binds directly to 16S rRNA where it nucleates assembly of the body of the 30S subunit. Functionally, with S5 and S12 plays an important role in translational accuracy. The sequence is that of Small ribosomal subunit protein uS4c (rps4) from Yucca filamentosa (Bear-grass).